A 312-amino-acid polypeptide reads, in one-letter code: Olfactory receptor 6C70 (312 aa).

At 1-22 (MKNHTRQIEFILLGLTDNSQLQ) the chain is on the extracellular side. N3 carries an N-linked (GlcNAc...) asparagine glycan. The chain crosses the membrane as a helical span at residues 23–43 (IVIFLFLLLNCVLSMIGNFTI). At 44–63 (IALILLDSQLKTPMYFFLRN) the chain is on the cytoplasmic side. A helical transmembrane segment spans residues 64 to 84 (FSFLEISFTTACIPRFLITIV). The Extracellular portion of the chain corresponds to 85–95 (TREKTISCNGC). Cysteines 95 and 177 form a disulfide. The helical transmembrane segment at 96–116 (ISQLFFYIFLGVTEFFLLAAL) threads the bilayer. The Cytoplasmic segment spans residues 117–141 (SYDRYVAICKPLRYMSIMSNKVCYQ). Residues 142-162 (LVFSSWVTGFLIIFTPLILGL) traverse the membrane as a helical segment. At 163–194 (NLDFCASNIIDHFICDISLILQLSCSDTHLLE) the chain is on the extracellular side. Residues 195-215 (LIAFLLAVMTLIVTLFLVILS) traverse the membrane as a helical segment. The Cytoplasmic segment spans residues 216–237 (YSYIIKTILKFPSAQQKKKAFS). The chain crosses the membrane as a helical span at residues 238–258 (TCSSHMIVVSITYGSCMFIYI). Topologically, residues 259–272 (KPSANERVALSKGV) are extracellular. A helical membrane pass occupies residues 273 to 290 (TVLNTSVAPLLNPFIYTL). Over 291–312 (RNQQVKQAFKAVFRKIFSASDK) the chain is Cytoplasmic.

Belongs to the G-protein coupled receptor 1 family.

The protein localises to the cell membrane. Functionally, odorant receptor. This chain is Olfactory receptor 6C70 (OR6C70), found in Homo sapiens (Human).